We begin with the raw amino-acid sequence, 445 residues long: Phosphoglucosamine mutase (445 aa).

The active-site Phosphoserine intermediate is serine 102. Mg(2+) contacts are provided by serine 102, aspartate 240, aspartate 242, and aspartate 244. Serine 102 is modified (phosphoserine).

It belongs to the phosphohexose mutase family. Mg(2+) is required as a cofactor. Post-translationally, activated by phosphorylation.

It carries out the reaction alpha-D-glucosamine 1-phosphate = D-glucosamine 6-phosphate. Functionally, catalyzes the conversion of glucosamine-6-phosphate to glucosamine-1-phosphate. This is Phosphoglucosamine mutase from Mycolicibacterium vanbaalenii (strain DSM 7251 / JCM 13017 / BCRC 16820 / KCTC 9966 / NRRL B-24157 / PYR-1) (Mycobacterium vanbaalenii).